The following is a 120-amino-acid chain: ATP-dependent Clp protease adapter protein ClpS (120 aa).

The tract at residues Met-1–Gly-25 is disordered.

This sequence belongs to the ClpS family. In terms of assembly, binds to the N-terminal domain of the chaperone ClpA.

Its function is as follows. Involved in the modulation of the specificity of the ClpAP-mediated ATP-dependent protein degradation. This Pseudomonas putida (strain W619) protein is ATP-dependent Clp protease adapter protein ClpS.